The chain runs to 90 residues: DNA-binding protein HU (90 aa).

The protein belongs to the bacterial histone-like protein family. In terms of assembly, homodimer.

Histone-like DNA-binding protein which is capable of wrapping DNA to stabilize it, and thus to prevent its denaturation under extreme environmental conditions. This chain is DNA-binding protein HU (hup), found in Pasteurella multocida (strain Pm70).